A 393-amino-acid chain; its full sequence is Digeranylgeranylglycerophospholipid reductase (393 aa).

Residues alanine 13, aspartate 32, cysteine 43, alanine 44, glycine 46, arginine 95, valine 119, aspartate 274, and glycine 286 each contribute to the FAD site. Residues arginine 327 and glycine 363 each contribute to the a 2,3-bis-O-(geranylgeranyl)-sn-glycerol 1-phospholipid site.

It belongs to the geranylgeranyl reductase family. DGGGPL reductase subfamily. The cofactor is FAD.

The enzyme catalyses a 2,3-bis-O-phytanyl-sn-glycerol 1-phospholipid + 8 A = a 2,3-bis-O-(geranylgeranyl)-sn-glycerol 1-phospholipid + 8 AH2. It catalyses the reaction 2,3-bis-O-(phytanyl)-sn-glycerol 1-phosphate + 8 A = 2,3-bis-O-(geranylgeranyl)-sn-glycerol 1-phosphate + 8 AH2. It carries out the reaction CDP-2,3-bis-O-(geranylgeranyl)-sn-glycerol + 8 AH2 = CDP-2,3-bis-O-(phytanyl)-sn-glycerol + 8 A. The catalysed reaction is archaetidylserine + 8 AH2 = 2,3-bis-O-phytanyl-sn-glycero-3-phospho-L-serine + 8 A. It functions in the pathway membrane lipid metabolism; glycerophospholipid metabolism. Is involved in the reduction of 2,3-digeranylgeranylglycerophospholipids (unsaturated archaeols) into 2,3-diphytanylglycerophospholipids (saturated archaeols) in the biosynthesis of archaeal membrane lipids. Catalyzes the formation of archaetidic acid (2,3-di-O-phytanyl-sn-glyceryl phosphate) from 2,3-di-O-geranylgeranylglyceryl phosphate (DGGGP) via the hydrogenation of each double bond of the isoprenoid chains. Is also probably able to reduce double bonds of geranyl groups in CDP-2,3-bis-O-(geranylgeranyl)-sn-glycerol and archaetidylserine, thus acting at various stages in the biosynthesis of archaeal membrane lipids. This chain is Digeranylgeranylglycerophospholipid reductase, found in Pyrococcus horikoshii (strain ATCC 700860 / DSM 12428 / JCM 9974 / NBRC 100139 / OT-3).